A 572-amino-acid chain; its full sequence is MANLSFTENGDKAYNTSGSACIDFFVRITRSSQLTDYISTFGKAWNEDKNIAMKILYNLRDIRTGKGEKIIPVAIMTYLKFHLNSDIYNSIVTDFVTMYGCWKDLLKIVEIETRFRLSTPSVSNKNINPIEIKLFADQLQKDFDTVNNNTGSSKVAISLCAKWAPSEKQHYNKAPLLIADSIRSQMGLTPRQYRKMLTKLRSHLQVLEMLMSTHQYDKIDFSKLPSVALMKMKNAFNRDTNSQGIKSDFRVNLHTSYTKYLQDLSKGKTKVNTKGIQPHELVGQYLSSSDFDQLVESQWDAIKKGVSDSGTFNNVTAVVDVSGSMHGQPMQVAIALGILVAECTSGPYHGRVITFHEKPSWHHLTGSNLMEKVKCMRDAPWGGSTNMKSVFDLVLQNAINAKLKPHEMIDTLFIFTDMQFNQCDCSGLESTFEYGQRKFTEAGYTFPKVVCWNLRTSNSKSLPLMKNDEGYVMLSGFSAELLKCIMNAEEFNPMSMLLHVLEPYVLNPVFINSETVDINSIIDDESNKNNFNKAVERSKFKKAYKKSSNTNSTTNSMNPRRSTVSSEDWVLN.

The disordered stretch occupies residues 543–572 (AYKKSSNTNSTTNSMNPRRSTVSSEDWVLN). Residues 547 to 563 (SSNTNSTTNSMNPRRST) show a composition bias toward low complexity.

This is an uncharacterized protein from Acanthamoeba polyphaga (Amoeba).